The sequence spans 294 residues: Lipoyl synthase (294 aa).

Positions 35, 40, 46, 61, 65, 68, and 273 each coordinate [4Fe-4S] cluster. The Radical SAM core domain maps to 47–262; that stretch reads FRQRQATFLI…REQALSMGFE (216 aa).

It belongs to the radical SAM superfamily. Lipoyl synthase family. [4Fe-4S] cluster is required as a cofactor.

The protein resides in the cytoplasm. The enzyme catalyses [[Fe-S] cluster scaffold protein carrying a second [4Fe-4S](2+) cluster] + N(6)-octanoyl-L-lysyl-[protein] + 2 oxidized [2Fe-2S]-[ferredoxin] + 2 S-adenosyl-L-methionine + 4 H(+) = [[Fe-S] cluster scaffold protein] + N(6)-[(R)-dihydrolipoyl]-L-lysyl-[protein] + 4 Fe(3+) + 2 hydrogen sulfide + 2 5'-deoxyadenosine + 2 L-methionine + 2 reduced [2Fe-2S]-[ferredoxin]. It functions in the pathway protein modification; protein lipoylation via endogenous pathway; protein N(6)-(lipoyl)lysine from octanoyl-[acyl-carrier-protein]: step 2/2. Its function is as follows. Catalyzes the radical-mediated insertion of two sulfur atoms into the C-6 and C-8 positions of the octanoyl moiety bound to the lipoyl domains of lipoate-dependent enzymes, thereby converting the octanoylated domains into lipoylated derivatives. The sequence is that of Lipoyl synthase from Geotalea daltonii (strain DSM 22248 / JCM 15807 / FRC-32) (Geobacter daltonii).